The following is a 244-amino-acid chain: UPF0280 protein MJ1526 (244 aa).

The protein belongs to the UPF0280 family.

The chain is UPF0280 protein MJ1526 from Methanocaldococcus jannaschii (strain ATCC 43067 / DSM 2661 / JAL-1 / JCM 10045 / NBRC 100440) (Methanococcus jannaschii).